Consider the following 355-residue polypeptide: UDP-N-acetylglucosamine--N-acetylmuramyl-(pentapeptide) pyrophosphoryl-undecaprenol N-acetylglucosamine transferase (355 aa).

Residues 15–17, asparagine 127, arginine 163, serine 191, isoleucine 244, 263–268, and glutamine 288 contribute to the UDP-N-acetyl-alpha-D-glucosamine site; these read TGG and ALTVSE.

This sequence belongs to the glycosyltransferase 28 family. MurG subfamily.

The protein localises to the cell inner membrane. The catalysed reaction is di-trans,octa-cis-undecaprenyl diphospho-N-acetyl-alpha-D-muramoyl-L-alanyl-D-glutamyl-meso-2,6-diaminopimeloyl-D-alanyl-D-alanine + UDP-N-acetyl-alpha-D-glucosamine = di-trans,octa-cis-undecaprenyl diphospho-[N-acetyl-alpha-D-glucosaminyl-(1-&gt;4)]-N-acetyl-alpha-D-muramoyl-L-alanyl-D-glutamyl-meso-2,6-diaminopimeloyl-D-alanyl-D-alanine + UDP + H(+). The protein operates within cell wall biogenesis; peptidoglycan biosynthesis. In terms of biological role, cell wall formation. Catalyzes the transfer of a GlcNAc subunit on undecaprenyl-pyrophosphoryl-MurNAc-pentapeptide (lipid intermediate I) to form undecaprenyl-pyrophosphoryl-MurNAc-(pentapeptide)GlcNAc (lipid intermediate II). The protein is UDP-N-acetylglucosamine--N-acetylmuramyl-(pentapeptide) pyrophosphoryl-undecaprenol N-acetylglucosamine transferase of Salmonella dublin (strain CT_02021853).